A 1885-amino-acid polypeptide reads, in one-letter code: Fatty acid synthase subunit alpha (1885 aa).

Residues 92 to 107 (PDPADLAPKETPKQEE) are compositionally biased toward basic and acidic residues. The segment at 92–140 (PDPADLAPKETPKQEESTPSAPAAATPTPAAAAAPTPAPAPASAGPVES) is disordered. Over residues 108–126 (STPSAPAAATPTPAAAAAP) the composition is skewed to low complexity. Residues 146-221 (VKANLLIHVL…EQFQDSFSGQ (76 aa)) form the Carrier domain. Serine 181 carries the post-translational modification O-(pantetheine 4'-phosphoryl)serine. Residues 1121 to 1661 (IQEIVVQHDL…QKGAQAVVVH (541 aa)) enclose the Ketosynthase family 3 (KS3) domain. Residues cysteine 1304, histidine 1546, and histidine 1587 each act as for beta-ketoacyl synthase activity in the active site. Residues aspartate 1771, valine 1772, and glutamate 1773 each coordinate Mg(2+). Acetyl-CoA-binding positions include 1771–1773 (DVE), tyrosine 1797, serine 1807, 1816–1826 (EAVFKALGVES), 1840–1843 (RDVN), and 1870–1872 (ISH). 2 residues coordinate Mg(2+): serine 1871 and histidine 1872.

Belongs to the thiolase-like superfamily. Fungal fatty acid synthetase subunit alpha family. [Alpha(6)beta(6)] hexamers of two multifunctional subunits (alpha and beta).

The enzyme catalyses acetyl-CoA + n malonyl-CoA + 2n NADPH + 4n H(+) = a long-chain-acyl-CoA + n CoA + n CO2 + 2n NADP(+).. It catalyses the reaction a fatty acyl-[ACP] + malonyl-[ACP] + H(+) = a 3-oxoacyl-[ACP] + holo-[ACP] + CO2. The catalysed reaction is a (3R)-hydroxyacyl-[ACP] + NADP(+) = a 3-oxoacyl-[ACP] + NADPH + H(+). Fatty acid synthetase catalyzes the formation of long-chain fatty acids from acetyl-CoA, malonyl-CoA and NADPH. The alpha subunit contains domains for: acyl carrier protein, 3-oxoacyl-[acyl-carrier-protein] reductase, and 3-oxoacyl-[acyl-carrier-protein] synthase. The sequence is that of Fatty acid synthase subunit alpha (FAS2) from Candida albicans (Yeast).